The sequence spans 855 residues: DNA mismatch repair protein MutS (855 aa).

613 to 620 (GPNMGGKS) serves as a coordination point for ATP.

Belongs to the DNA mismatch repair MutS family.

This protein is involved in the repair of mismatches in DNA. It is possible that it carries out the mismatch recognition step. This protein has a weak ATPase activity. The chain is DNA mismatch repair protein MutS from Azotobacter vinelandii (strain DJ / ATCC BAA-1303).